The following is a 151-amino-acid chain: Desiccation-related protein PCC27-45 (151 aa).

The protein belongs to the LEA type 2 family.

This is Desiccation-related protein PCC27-45 from Craterostigma plantagineum (Blue gem).